The chain runs to 183 residues: Apo-citrate lyase phosphoribosyl-dephospho-CoA transferase (183 aa).

It belongs to the CitX family.

It catalyses the reaction apo-[citrate lyase ACP] + 2'-(5''-triphospho-alpha-D-ribosyl)-3'-dephospho-CoA = holo-[citrate lyase ACP] + diphosphate. Functionally, transfers 2-(5''-triphosphoribosyl)-3'-dephosphocoenzyme-A on a serine residue to the apo-acyl carrier protein (gamma chain) of the citrate lyase to yield holo-acyl carrier protein. The chain is Apo-citrate lyase phosphoribosyl-dephospho-CoA transferase from Escherichia coli O139:H28 (strain E24377A / ETEC).